We begin with the raw amino-acid sequence, 270 residues long: uncharacterized protein (270 aa).

Possibly involved in pGI2 replication mechanism. This is an uncharacterized protein from Bacillus thuringiensis.